Reading from the N-terminus, the 118-residue chain is Large ribosomal subunit protein bL19 (118 aa).

The protein belongs to the bacterial ribosomal protein bL19 family.

Its function is as follows. This protein is located at the 30S-50S ribosomal subunit interface and may play a role in the structure and function of the aminoacyl-tRNA binding site. The chain is Large ribosomal subunit protein bL19 from Buchnera aphidicola subsp. Baizongia pistaciae (strain Bp).